Consider the following 287-residue polypeptide: 4-diphosphocytidyl-2-C-methyl-D-erythritol kinase (287 aa).

Residue K14 is part of the active site. Residue 96-106 (PWGAGLGGGSS) participates in ATP binding. The active site involves D138.

This sequence belongs to the GHMP kinase family. IspE subfamily.

The catalysed reaction is 4-CDP-2-C-methyl-D-erythritol + ATP = 4-CDP-2-C-methyl-D-erythritol 2-phosphate + ADP + H(+). It functions in the pathway isoprenoid biosynthesis; isopentenyl diphosphate biosynthesis via DXP pathway; isopentenyl diphosphate from 1-deoxy-D-xylulose 5-phosphate: step 3/6. Functionally, catalyzes the phosphorylation of the position 2 hydroxy group of 4-diphosphocytidyl-2C-methyl-D-erythritol. The sequence is that of 4-diphosphocytidyl-2-C-methyl-D-erythritol kinase from Methylibium petroleiphilum (strain ATCC BAA-1232 / LMG 22953 / PM1).